The sequence spans 484 residues: Zinc metalloproteinase-disintegrin jerdonitin (484 aa).

Positions methionine 1 to serine 20 are cleaved as a signal peptide. The propeptide occupies isoleucine 21–glutamate 191. Pyrrolidone carboxylic acid is present on glutamine 192. The region spanning arginine 194–proline 392 is the Peptidase M12B domain. Ca(2+) is bound by residues glutamate 197 and aspartate 281. 3 disulfides stabilise this stretch: cysteine 305-cysteine 387, cysteine 345-cysteine 369, and cysteine 347-cysteine 352. Residue histidine 330 participates in Zn(2+) binding. Glutamate 331 is a catalytic residue. Zn(2+)-binding residues include histidine 334 and histidine 340. Residues cysteine 387, asparagine 390, valine 402, asparagine 405, glutamate 409, glutamate 412, and aspartate 415 each contribute to the Ca(2+) site. Residues proline 400–alanine 484 form the Disintegrin domain. 7 cysteine pairs are disulfide-bonded: cysteine 403/cysteine 422, cysteine 414/cysteine 432, cysteine 416/cysteine 427, cysteine 426/cysteine 449, cysteine 440/cysteine 446, cysteine 445/cysteine 470, and cysteine 458/cysteine 477. The Cell attachment site motif lies at arginine 462–aspartate 464.

Belongs to the venom metalloproteinase (M12B) family. P-II subfamily. P-IIb sub-subfamily. Monomer. The cofactor is Zn(2+). Post-translationally, the N-terminus is blocked. As to expression, expressed by the venom gland.

Its subcellular location is the secreted. Its activity is regulated as follows. Fibrinogenolytic activity is completely inhibited by EDTA, but not by PMSF. Snake venom zinc metalloproteinase that inhibits ADP-induced human platelet aggregation (IC(50)=120 nM (native) and IC(50)=248 nM (recombinant)). May act by binding to the receptor GPIIb/GPIIIa (ITGA2B/ITGB3) on the platelet surface. Degrades the alpha-chain of fibrinogen completely and the beta-chain partially, leaving the gamma chain intact. Also inhibits the growth of several cell lines, including human liver cancer cells (Bel7402), human leukemia cells (K562) and human gastric carcinoma cells (BGC823). The protein is Zinc metalloproteinase-disintegrin jerdonitin of Protobothrops jerdonii (Jerdon's pitviper).